Consider the following 1026-residue polypeptide: Multidrug resistance protein MdtC (1026 aa).

The next 11 helical transmembrane spans lie at I15 to A35, E333 to L353, L360 to C380, L387 to L407, V431 to L451, F463 to P483, L528 to P548, L853 to S873, L897 to V917, P953 to G973, and I984 to V1004.

The protein belongs to the resistance-nodulation-cell division (RND) (TC 2.A.6) family. MdtC subfamily. In terms of assembly, part of a tripartite efflux system composed of MdtA, MdtB and MdtC. MdtC forms a heteromultimer with MdtB.

Its subcellular location is the cell inner membrane. This is Multidrug resistance protein MdtC from Salmonella arizonae (strain ATCC BAA-731 / CDC346-86 / RSK2980).